The following is a 184-amino-acid chain: Photosystem I assembly protein Ycf4 (184 aa).

2 helical membrane passes run 22–42 and 57–77; these read FCWAFILFLGSLGFLLVGTSS and IIFFPQGIVMSFYGIAGLFIS.

The protein belongs to the Ycf4 family.

It localises to the plastid. The protein resides in the chloroplast thylakoid membrane. Functionally, seems to be required for the assembly of the photosystem I complex. This Olimarabidopsis pumila (Dwarf rocket) protein is Photosystem I assembly protein Ycf4.